Here is an 880-residue protein sequence, read N- to C-terminus: Replication origin-binding protein (880 aa).

Positions 60 to 225 (PLPIRTKPVL…AELRGAENVH (166 aa)) constitute a Helicase ATP-binding domain. Position 73-80 (73-80 (APMGSGKT)) interacts with ATP. Residues 260–287 (PPAGDESREASASQPPPHDSSNEPCAPE) are disordered.

This sequence belongs to the herpesviridae OriBP family. In terms of assembly, homodimer. Interacts with the major DNA-binding protein. Interacts with the DNA helicase/primase complex-associated protein and the polymerase accessory protein.

Its subcellular location is the host nucleus. In terms of biological role, functions as a docking protein to recruit essential components of the viral replication machinery to viral DNA origins. In the presence of the major DNA-binding protein, opens dsDNA leading to a conformational change in the origin that facilitates DNA unwinding and subsequent replication. The chain is Replication origin-binding protein (UL9) from Psittacid herpesvirus 1 (isolate Amazon parrot/-/97-0001/1997) (PsHV-1).